The sequence spans 529 residues: MASSRLWFSLLLAAALAGRATALWPWPQNIQTSDQRYVLYPNNFQFQYDVSSAAQPGCSVLDEAFQRYRDLLFGSGSWPRPYLTGKRHTLEKNVLVVSVVTPGCNQLPTLESVENYTLTINDDQCLLLSETVWGALRGLETFSQLVWKSAEGTFFINKTEIEDFPRFPHRGLLLDTSRHYLPLSSILDTLDVMAYNKLNVFHWHLVDDPSFPYESFTFPELMRKGSYNPVTHIYTAQDVKEVIEYARLRGIRVLAEFDTPGHTLSWGPGIPGLLTPCYSGSEPSGTFGPVNPSLNNTYEFMSTFFLEVSSVFPDFYLHLGGDEVDFTCWKSNPDIQDFMRKKGFGEDFKQLESFYIQTLLDIVSSYGKGYVVWQEVFDNKVKIRPDTIIQVWREDIPVNYMKELELVTKAGFRALLSAPWYLNRISYGPDWKDFYVVEPLAFEGTPEQKALVIGGEACMWGEYVDNTNLVPRLWPRAGAVAERLWSNKLTSDLTFAYERLSHFRCELLRRGVQAQPLNVGFCEQEFEQT.

The N-terminal stretch at 1-22 is a signal peptide; that stretch reads MASSRLWFSLLLAAALAGRATA. Positions 23-88 are excised as a propeptide; sequence LWPWPQNIQT…PRPYLTGKRH (66 aa). Cysteine 58 and cysteine 104 are disulfide-bonded. N-linked (GlcNAc...) asparagine glycans are attached at residues asparagine 115, asparagine 157, and asparagine 295. The cysteines at positions 277 and 328 are disulfide-linked. The active-site Proton donor is glutamate 323. The tract at residues 423 to 424 is critical for hydrolysis GM2 gangliosides; sequence NR. Cysteines 505 and 522 form a disulfide.

Belongs to the glycosyl hydrolase 20 family. As to quaternary structure, there are 3 beta-hexosaminidase isozymes: isozyme A (hexosaminidase A) is a heterodimer composed of one subunit alpha and one subunit beta (chain A and B); isozyme B (hexosaminidase B) is a homodimer of two beta subunits (two chains A and B); isozyme S (hexosaminidase S) is a homodimer of two alpha subunits. The composition of the dimer (isozyme A versus isozyme S) has a significant effect on the substrate specificity of the alpha subunit active site.

It localises to the lysosome. It carries out the reaction Hydrolysis of terminal non-reducing N-acetyl-D-hexosamine residues in N-acetyl-beta-D-hexosaminides.. The catalysed reaction is N-acetyl-beta-D-galactosaminyl-(1-&gt;4)-beta-D-3-sulfogalactosyl-(1-&gt;4)-beta-D-glucosyl-(1&lt;-&gt;1')-ceramide + H2O = a beta-D-3-sulfogalactosyl-(1-&gt;4)-beta-D-glucosyl-(1&lt;-&gt;1')-ceramide + N-acetyl-beta-D-galactosamine. The enzyme catalyses a ganglioside GM2 (d18:1(4E)) + H2O = a ganglioside GM3 (d18:1(4E)) + N-acetyl-beta-D-galactosamine. It catalyses the reaction a ganglioside GM2 + H2O = a ganglioside GM3 + N-acetyl-beta-D-galactosamine. It carries out the reaction beta-D-GalNAc-(1-&gt;4)-alpha-L-IdoA-(1-&gt;3)-beta-D-GalNAc-4-sulfate-(1-&gt;4)-alpha-L-IdoA-(1-&gt;3)-D-GalNAc-4-sulfate + H2O = alpha-L-IdoA-(1-&gt;3)-beta-D-GalNAc-4-sulfate-(1-&gt;4)-alpha-L-IdoA-(1-&gt;3)-D-GalNAc-4-sulfate + N-acetyl-D-galactosamine. The catalysed reaction is N-acetyl-beta-D-6-sulfogalactosaminyl-(1-&gt;4)-alpha-L-iduronyl-(1-&gt;3)-N-acetyl-D-6-sulfogalactosamine + H2O = alpha-L-iduronyl-(1-&gt;3)-N-acetyl-D-6-sulfogalactosamine + N-acetyl-D-6-sulfogalactosamine. With respect to regulation, addition of GM2A stimulates the hydrolysis of sulfated glycosphingolipid SM2 and the ganglioside GM2. Its function is as follows. Hydrolyzes the non-reducing end N-acetyl-D-hexosamine and/or sulfated N-acetyl-D-hexosamine of glycoconjugates, such as the oligosaccharide moieties from proteins and neutral glycolipids, or from certain mucopolysaccharides. The isozyme S is as active as the isozyme A on the anionic bis-sulfated glycans, the chondroitin-6-sulfate trisaccharide (C6S-3), and the dermatan sulfate pentasaccharide, and the sulfated glycosphingolipid SM2. The isozyme B does not hydrolyze each of these substrates, however hydrolyzes efficiently neutral oligosaccharide. Only the isozyme A is responsible for the degradation of GM2 gangliosides in the presence of GM2A. This Pongo abelii (Sumatran orangutan) protein is Beta-hexosaminidase subunit alpha.